Reading from the N-terminus, the 201-residue chain is Desiccation-related protein PCC3-06 (201 aa).

Polar residues predominate over residues 41–54; sequence TVASQSQGRQQVSE. 2 disordered regions span residues 41 to 155 and 177 to 201; these read TVAS…QNVK and MGKS…TNYF. Basic and acidic residues-rich tracts occupy residues 57–76, 108–144, and 177–193; these read EDAK…KTSE, GELK…ERVA, and MGKS…ETKK.

It belongs to the LEA type 1 family.

This Craterostigma plantagineum (Blue gem) protein is Desiccation-related protein PCC3-06.